We begin with the raw amino-acid sequence, 429 residues long: Adenylosuccinate synthetase (429 aa).

GTP-binding positions include 12 to 18 and 40 to 42; these read GDEGKGK and GHT. Catalysis depends on Asp-13, which acts as the Proton acceptor. Mg(2+) is bound by residues Asp-13 and Gly-40. IMP-binding positions include 13-16, 38-41, Thr-128, Arg-142, Gln-223, Thr-238, and Arg-302; these read DEGK and NAGH. Catalysis depends on His-41, which acts as the Proton donor. 298-304 is a binding site for substrate; sequence VNTGRKR. GTP contacts are provided by residues Arg-304, 330–332, and 412–414; these read KLD and GVG.

The protein belongs to the adenylosuccinate synthetase family. In terms of assembly, homodimer. The cofactor is Mg(2+).

It localises to the cytoplasm. It carries out the reaction IMP + L-aspartate + GTP = N(6)-(1,2-dicarboxyethyl)-AMP + GDP + phosphate + 2 H(+). Its pathway is purine metabolism; AMP biosynthesis via de novo pathway; AMP from IMP: step 1/2. Its function is as follows. Plays an important role in the de novo pathway of purine nucleotide biosynthesis. Catalyzes the first committed step in the biosynthesis of AMP from IMP. In Corynebacterium efficiens (strain DSM 44549 / YS-314 / AJ 12310 / JCM 11189 / NBRC 100395), this protein is Adenylosuccinate synthetase.